The following is a 395-amino-acid chain: MNENSISQYSEIDLISDNPFKNYFVVEKLLNNNNNNINDTIGNNHYSNNNNNNKFLNNNNKNKINKKQIILKVQKKSNKAMKELTVMQKIGYYSNHVVNVYGYFNLKGCDRMLKPRLLSDNDELIFMECEDMGQYQTLEMIIERRKCKGSLVMTRFIMRGILASAYYFESHQVIHQTLHPGNIYILEDSLGTDDQSVVKFSNLEHCLLIGSTNSSLSSLSSSTSSSSSSSSSTNCNNNTTENNNNNYNNNNNNNNNNNNNNNNNSLNDRFVLGKDSVCYSIYSDRHQSRNLFKVVSSNTVSFTVGIIYLELLLSTIYDHVFPNEEYINSLREIVRNGKLDIYTNQATNTKYFRFNQNHQIEITDLIKDDISLILTLLQDSSTRPTITQFIIDYLF.

The region spanning 9 to 395 (YSEIDLISDN…ITQFIIDYLF (387 aa)) is the Protein kinase domain. Residues 15–23 (ISDNPFKNY) and Lys-54 contribute to the ATP site. A disordered region spans residues 213–266 (NSSLSSLSSSTSSSSSSSSSTNCNNNTTENNNNNYNNNNNNNNNNNNNNNNNSL).

This sequence belongs to the protein kinase superfamily. Ser/Thr protein kinase family.

The chain is Probable inactive serine/threonine-protein kinase DDB_G0293746 from Dictyostelium discoideum (Social amoeba).